The sequence spans 1237 residues: ATP-dependent RNA helicase DEAH13 (1237 aa).

Disordered regions lie at residues 1-51 (MASV…NSNV) and 115-148 (AMQL…EPTT). The segment covering 24-38 (SNKMQDKLNSNNNTG) has biased composition (polar residues). Residues 131–143 (SVEQNDNDDDSCM) are compositionally biased toward acidic residues. The Helicase ATP-binding domain maps to 251 to 443 (MEAINRHPAV…KRLFPNIPPL (193 aa)). 264 to 271 (GQTGCGKT) contributes to the ATP binding site. The DEAH box signature appears at 367–370 (DEAH). A disordered region spans residues 543-585 (DDDSNNQNSRFSSHGEDPSDIGDGNYDDDFEEEDMYESDEDRD). Acidic residues predominate over residues 567-585 (NYDDDFEEEDMYESDEDRD). Residues 605–776 (ALRAAFNALA…GVILLMKSMN (172 aa)) enclose the Helicase C-terminal domain. The interval 876-910 (EKKNESKDADKTVKQEDKQRKKDRKEKIKAARDRF) is disordered.

It belongs to the DEAD box helicase family. DEAH subfamily.

The catalysed reaction is ATP + H2O = ADP + phosphate + H(+). The chain is ATP-dependent RNA helicase DEAH13 from Arabidopsis thaliana (Mouse-ear cress).